Consider the following 209-residue polypeptide: NDR1/HIN1-like protein 1 (209 aa).

A helical transmembrane segment spans residues 18-38 (IFWSIIFVLFIIFLTILLIWA). Asn-58 is a glycosylation site (N-linked (GlcNAc...) asparagine).

Expressed in rosette leaves, cauline leaves, stems, and siliques, and at lower levels in roots and flowers.

It is found in the cell membrane. Its function is as follows. May play a role in plant immunity. In Arabidopsis thaliana (Mouse-ear cress), this protein is NDR1/HIN1-like protein 1.